The chain runs to 377 residues: DNA replication and repair protein RecF (377 aa).

30–37 (GPNGVGKT) lines the ATP pocket.

It belongs to the RecF family.

It localises to the cytoplasm. In terms of biological role, the RecF protein is involved in DNA metabolism; it is required for DNA replication and normal SOS inducibility. RecF binds preferentially to single-stranded, linear DNA. It also seems to bind ATP. In Salinispora tropica (strain ATCC BAA-916 / DSM 44818 / JCM 13857 / NBRC 105044 / CNB-440), this protein is DNA replication and repair protein RecF.